Reading from the N-terminus, the 785-residue chain is Polyribonucleotide nucleotidyltransferase (785 aa).

Mg(2+) is bound by residues aspartate 516 and aspartate 522. The 60-residue stretch at 582-641 (PRVTTVKIPVDKIGMVIGPKGQTINAIQDETGAEISIEDDGTIYVGATNGPAAQAAVERI) folds into the KH domain. Residues 653 to 722 (GDRFLGTVVK…QRGKIYLDKV (70 aa)) enclose the S1 motif domain. The tract at residues 722–785 (VRPEGAEAPA…SRPRRRTRRS (64 aa)) is disordered. Residues 734-764 (AAERPAGRDRGDRGPRDRGDRGGRGPDRGDS) are compositionally biased toward basic and acidic residues.

Belongs to the polyribonucleotide nucleotidyltransferase family. It depends on Mg(2+) as a cofactor.

It is found in the cytoplasm. It catalyses the reaction RNA(n+1) + phosphate = RNA(n) + a ribonucleoside 5'-diphosphate. Involved in mRNA degradation. Catalyzes the phosphorolysis of single-stranded polyribonucleotides processively in the 3'- to 5'-direction. The protein is Polyribonucleotide nucleotidyltransferase of Salinispora tropica (strain ATCC BAA-916 / DSM 44818 / JCM 13857 / NBRC 105044 / CNB-440).